The following is a 705-amino-acid chain: Zinc finger protein 770 (705 aa).

A Glycyl lysine isopeptide (Lys-Gly) (interchain with G-Cter in SUMO2) cross-link involves residue Lys16. C2H2-type zinc fingers lie at residues 31–53 (YICNICFKHFETPSKLARHYLIH), 59–81 (FECDVCHKNFRQLVHLERHQLTH), and 85–107 (FSCNICQRHFKNLKTFVKHQQLH). Glycyl lysine isopeptide (Lys-Gly) (interchain with G-Cter in SUMO2) cross-links involve residues Lys116, Lys124, and Lys149. 3 consecutive C2H2-type zinc fingers follow at residues 164–186 (HACTICGKMFPSQSKLDRHSLIH), 192–214 (FKCVLCSKSFRQSTHLKIHQLTH), and 220–242 (FQCCFCQKGFKIQSKLLKHKQIH). A Glycyl lysine isopeptide (Lys-Gly) (interchain with G-Cter in SUMO2) cross-link involves residue Lys266. Residues 298-322 (FQCSECEECFESEQILNGHKCLPAR) form a C2H2-type 7; degenerate zinc finger. C2H2-type zinc fingers lie at residues 485–507 (CPCDKCDKVFPSISKLQRHYLIH), 513–535 (FDCNVCGKSFRQSAHLKRHKLTH), 640–662 (YQCSVCCKHFRSPSKLERHYLIH), and 668–690 (FECSVCGKTFRQAPHWKRHQLTH). Lys698 is covalently cross-linked (Glycyl lysine isopeptide (Lys-Gly) (interchain with G-Cter in SUMO2)).

It belongs to the krueppel C2H2-type zinc-finger protein family.

It is found in the nucleus. Its function is as follows. May be involved in transcriptional regulation. The chain is Zinc finger protein 770 (Znf770) from Mus musculus (Mouse).